We begin with the raw amino-acid sequence, 28 residues long: Nicotinic acetylcholine receptor-binding protein Mnn-3C (28 aa).

C3 and C24 form a disulfide bridge.

The protein belongs to the three-finger toxin family. Short-chain subfamily. In terms of tissue distribution, expressed by the venom gland.

The protein resides in the secreted. Its function is as follows. Binds and may inhibit nicotinic acetylcholine receptors (nAChR). This is Nicotinic acetylcholine receptor-binding protein Mnn-3C from Micrurus nigrocinctus (Central American coral snake).